Here is a 153-residue protein sequence, read N- to C-terminus: MGLNDQEWQQVLTMWGKVESDLAGHGHAVLMRLFKSHPETMDRFDKFRGLKTPDEMRGSEDMKKHGVTVLTLGQILKKKGHHEAELKPLSQTHATKHKVPVKYLEFISEAIMKVIAQKHASNFGADAQEAMKKALELFRNDMASKYKEFGFQG.

The Globin domain maps to glycine 2 to lysine 147. Histidine 65 is a nitrite binding site. Residue histidine 65 coordinates O2. Residue histidine 93 coordinates heme b.

Belongs to the globin family. In terms of assembly, monomeric.

It localises to the cytoplasm. The protein localises to the sarcoplasm. The catalysed reaction is Fe(III)-heme b-[protein] + nitric oxide + H2O = Fe(II)-heme b-[protein] + nitrite + 2 H(+). It carries out the reaction H2O2 + AH2 = A + 2 H2O. In terms of biological role, monomeric heme protein which primary function is to store oxygen and facilitate its diffusion within muscle tissues. Reversibly binds oxygen through a pentacoordinated heme iron and enables its timely and efficient release as needed during periods of heightened demand. Depending on the oxidative conditions of tissues and cells, and in addition to its ability to bind oxygen, it also has a nitrite reductase activity whereby it regulates the production of bioactive nitric oxide. Under stress conditions, like hypoxia and anoxia, it also protects cells against reactive oxygen species thanks to its pseudoperoxidase activity. The chain is Myoglobin (MB) from Aptenodytes forsteri (Emperor penguin).